The primary structure comprises 70 residues: Large ribosomal subunit protein eL38 (70 aa).

Belongs to the eukaryotic ribosomal protein eL38 family.

This is Large ribosomal subunit protein eL38 (RpL38) from Anopheles gambiae (African malaria mosquito).